A 429-amino-acid polypeptide reads, in one-letter code: UDP-N-acetylglucosamine 1-carboxyvinyltransferase (429 aa).

22–23 serves as a coordination point for phosphoenolpyruvate; it reads KN. Arginine 93 serves as a coordination point for UDP-N-acetyl-alpha-D-glucosamine. Cysteine 117 serves as the catalytic Proton donor. Residue cysteine 117 is modified to 2-(S-cysteinyl)pyruvic acid O-phosphothioketal. Residues 122 to 126, aspartate 313, and isoleucine 335 each bind UDP-N-acetyl-alpha-D-glucosamine; that span reads RPVDQ.

It belongs to the EPSP synthase family. MurA subfamily.

It is found in the cytoplasm. It carries out the reaction phosphoenolpyruvate + UDP-N-acetyl-alpha-D-glucosamine = UDP-N-acetyl-3-O-(1-carboxyvinyl)-alpha-D-glucosamine + phosphate. Its pathway is cell wall biogenesis; peptidoglycan biosynthesis. Cell wall formation. Adds enolpyruvyl to UDP-N-acetylglucosamine. In Variovorax paradoxus (strain S110), this protein is UDP-N-acetylglucosamine 1-carboxyvinyltransferase.